The primary structure comprises 138 residues: Vesicle transport protein GOT1B (138 aa).

M1 bears the N-acetylmethionine mark. The Cytoplasmic segment spans residues 1–9 (MISLTDTQK). A helical membrane pass occupies residues 10-30 (IGMGLTGFGVFFLFFGMILFF). The Lumenal portion of the chain corresponds to 31-32 (DK). Residues 33 to 53 (ALLAIGNVLFVAGLAFVIGLE) form a helical membrane-spanning segment. Residues 54–68 (RTFRFFFQRHKVKAT) lie on the Cytoplasmic side of the membrane. Residue E90 is a topological domain, lumenal. Residues 91–109 (IYGFFLLFRGFFPVVVGFI) form a helical membrane-spanning segment. Residues 110–138 (RRVPVLGSLLNLPGIRSFVDKVGESNNMV) lie on the Cytoplasmic side of the membrane.

The protein belongs to the GOT1 family.

It localises to the golgi apparatus membrane. Functionally, may be involved in fusion of ER-derived transport vesicles with the Golgi complex. The polypeptide is Vesicle transport protein GOT1B (Golt1b) (Mus musculus (Mouse)).